The chain runs to 206 residues: Small ribosomal subunit protein uS4 (206 aa).

The S4 RNA-binding domain occupies 96 to 156; that stretch reads GRLDNVVYRM…EKAKKQSRVK (61 aa).

This sequence belongs to the universal ribosomal protein uS4 family. Part of the 30S ribosomal subunit. Contacts protein S5. The interaction surface between S4 and S5 is involved in control of translational fidelity.

Its function is as follows. One of the primary rRNA binding proteins, it binds directly to 16S rRNA where it nucleates assembly of the body of the 30S subunit. In terms of biological role, with S5 and S12 plays an important role in translational accuracy. This Shigella flexneri protein is Small ribosomal subunit protein uS4.